The sequence spans 256 residues: Histone H1 (256 aa).

Composition is skewed to low complexity over residues 1–19 (MSDSAVATSASPVAAPPAT) and 27–43 (KKASGSAGTKAKKASAT). Disordered stretches follow at residues 1–53 (MSDS…QQMV) and 108–256 (GKGA…AAKK). Residue Ser11 is modified to Phosphoserine. An H15 domain is found at 45–119 (SHPPTQQMVD…GASGSFKLSA (75 aa)). 2 stretches are compositionally biased toward basic and acidic residues: residues 121-140 (AKKEKDPKAKSKVLSAEKKV) and 176-193 (KTAENKKTEKAKAKDAKK). The segment covering 194–229 (TGIIKSKPAATKAKVTAAKPKAVVAKASKAKPAVSA) has biased composition (low complexity). Over residues 245–256 (KKPKAKTTAAKK) the composition is skewed to basic residues.

This sequence belongs to the histone H1/H5 family. In terms of processing, phosphorylated in oocytes during prophase I of meiosis.

Its subcellular location is the nucleus. The protein resides in the chromosome. In terms of biological role, histones H1 are necessary for the condensation of nucleosome chains into higher-order structures. The sequence is that of Histone H1 (His1) from Drosophila melanogaster (Fruit fly).